The chain runs to 894 residues: E3 ubiquitin-protein ligase SH3RF1 (894 aa).

The RING-type zinc finger occupies 12 to 53 (CPVCLERLDASAKVLPCQHTFCKRCLLGIVGSRNELRCPECR). 2 SH3 domains span residues 134-193 (PQLP…IIKP) and 196-259 (QPPP…FNSA). The segment at 274-323 (VDTAECPSATAAQSSSASKHSDTKKNTRKRHSFTSLTMANKSSQASQNRH) is disordered. The segment covering 281-291 (SATAAQSSSAS) has biased composition (low complexity). The segment at 293-363 (HSDTKKNTRK…APSQVHISTT (71 aa)) is interaction with RAC1. Serine 305 is modified (phosphoserine). Residues 306–322 (FTSLTMANKSSQASQNR) show a composition bias toward polar residues. Positions 448 to 551 (HLRPQTRPSV…STAGGPAQKP (104 aa)) are interaction with AKT2. An SH3 3 domain is found at 453–514 (TRPSVYVAIY…PGNYVAPVTR (62 aa)). 2 disordered regions span residues 526-556 (MSTA…GNGV) and 682-751 (LETE…PTLD). Serine 540 carries the phosphoserine modification. Residues 700 to 713 (SPESAASACGNSSA) are compositionally biased toward polar residues. Basic and acidic residues predominate over residues 715-726 (KPDKDSKKEKKG). At serine 743 the chain carries Phosphoserine. Residues 835 to 894 (VVCERHRVVVSYPPQSEAELELKEGDIVFVHKKREDGWFKGTLQRNGKTGLFPGSFVENI) form the SH3 4 domain.

Belongs to the SH3RF family. In terms of assembly, interacts with HERP1. Interacts with RAC1; in a GTP-dependent manner. Interacts with MAP3K10/MLK2 and MAP3K11/MLK3. Interacts with MAPK8IP; this interaction leads to the PJAC complex (POSH-JIP or SH3RF1/MAPK8IP apoptotic complex) with a 1:1 ratio. Interacts with SIAH1. Probably part of a signaling complex that may contain SH3RF1, MAPK8IP, DLK1, MAP2K4/MKK4, MAP2K7/MKK7, MAPK8/JNK1, MAPK9/JNK2, AKT1 and AKT2. Found in a complex with RAC2, MAP3K7/TAK1, MAP2K7/MKK7, MAPK8IP1/JIP1, MAPK8/JNK1 and MAPK9/JNK2. Found in a complex with RAC1, MAP3K11/MLK3, MAP2K7/MKK7, MAPK8IP1/JIP1 and MAPK8/JNK1. Interacts with SH3RF2. Post-translationally, phosphorylated at Ser-305 by AKT1 and AKT2. When phosphorylated, it has reduced ability to bind Rac. Autoubiquitinated. Ubiquitinated by SH3RF2, leading to proteasome-mediated degradation.

It is found in the cytoplasm. Its subcellular location is the perinuclear region. The protein resides in the cell projection. The protein localises to the lamellipodium. It localises to the golgi apparatus. It is found in the trans-Golgi network. It catalyses the reaction S-ubiquitinyl-[E2 ubiquitin-conjugating enzyme]-L-cysteine + [acceptor protein]-L-lysine = [E2 ubiquitin-conjugating enzyme]-L-cysteine + N(6)-ubiquitinyl-[acceptor protein]-L-lysine.. The protein operates within protein modification; protein ubiquitination. Its function is as follows. Has E3 ubiquitin-protein ligase activity. In the absence of an external substrate, it can catalyze self-ubiquitination. Stimulates ubiquitination of potassium channel KCNJ1, enhancing it's dynamin-dependent and clathrin-independent endocytosis. Acts as a scaffold protein that coordinates with MAPK8IP1/JIP1 in organizing different components of the JNK pathway, including RAC1 or RAC2, MAP3K11/MLK3 or MAP3K7/TAK1, MAP2K7/MKK7, MAPK8/JNK1 and/or MAPK9/JNK2 into a functional multiprotein complex to ensure the effective activation of the JNK signaling pathway. Regulates the differentiation of CD4(+) and CD8(+) T-cells and promotes T-helper 1 (Th1) cell differentiation. Regulates the activation of MAPK8/JNK1 and MAPK9/JNK2 in CD4(+) T-cells and the activation of MAPK8/JNK1 in CD8(+) T-cells. Plays a crucial role in the migration of neocortical neurons in the developing brain. Controls proper cortical neuronal migration and the formation of proximal cytoplasmic dilation in the leading process (PCDLP) in migratory neocortical neurons by regulating the proper localization of activated RAC1 and F-actin assembly. The polypeptide is E3 ubiquitin-protein ligase SH3RF1 (Sh3rf1) (Rattus norvegicus (Rat)).